We begin with the raw amino-acid sequence, 112 residues long: Low molecular weight protein antigen 6 (112 aa).

It is found in the secreted. In Mycobacterium bovis (strain ATCC BAA-935 / AF2122/97), this protein is Low molecular weight protein antigen 6 (cfp6).